Here is an 876-residue protein sequence, read N- to C-terminus: Alanine--tRNA ligase (876 aa).

Zn(2+) contacts are provided by His565, His569, Cys667, and His671.

This sequence belongs to the class-II aminoacyl-tRNA synthetase family. Zn(2+) serves as cofactor.

It is found in the cytoplasm. The catalysed reaction is tRNA(Ala) + L-alanine + ATP = L-alanyl-tRNA(Ala) + AMP + diphosphate. Its function is as follows. Catalyzes the attachment of alanine to tRNA(Ala) in a two-step reaction: alanine is first activated by ATP to form Ala-AMP and then transferred to the acceptor end of tRNA(Ala). Also edits incorrectly charged Ser-tRNA(Ala) and Gly-tRNA(Ala) via its editing domain. This chain is Alanine--tRNA ligase, found in Staphylococcus epidermidis (strain ATCC 35984 / DSM 28319 / BCRC 17069 / CCUG 31568 / BM 3577 / RP62A).